Consider the following 488-residue polypeptide: N-succinylglutamate 5-semialdehyde dehydrogenase (488 aa).

Residue 221 to 226 (GSSRTG) coordinates NAD(+). Active-site residues include Glu-244 and Cys-278.

This sequence belongs to the aldehyde dehydrogenase family. AstD subfamily.

The enzyme catalyses N-succinyl-L-glutamate 5-semialdehyde + NAD(+) + H2O = N-succinyl-L-glutamate + NADH + 2 H(+). It participates in amino-acid degradation; L-arginine degradation via AST pathway; L-glutamate and succinate from L-arginine: step 4/5. In terms of biological role, catalyzes the NAD-dependent reduction of succinylglutamate semialdehyde into succinylglutamate. The protein is N-succinylglutamate 5-semialdehyde dehydrogenase of Pseudomonas fluorescens (strain Pf0-1).